A 361-amino-acid polypeptide reads, in one-letter code: Phospho-N-acetylmuramoyl-pentapeptide-transferase (361 aa).

10 helical membrane-spanning segments follow: residues 25-45, 73-93, 97-117, 134-154, 168-188, 200-220, 240-260, 264-284, 289-309, and 338-358; these read RAVL…PWVI, TMGG…WADL, YVWL…YDDW, MFWQ…TASL, VIYP…IVGT, GLAA…AYVA, VAVF…FNAY, VFMG…VAVI, IVLF…MIQV, and QVVV…LSTL.

Belongs to the glycosyltransferase 4 family. MraY subfamily. Requires Mg(2+) as cofactor.

The protein resides in the cell inner membrane. The catalysed reaction is UDP-N-acetyl-alpha-D-muramoyl-L-alanyl-gamma-D-glutamyl-meso-2,6-diaminopimeloyl-D-alanyl-D-alanine + di-trans,octa-cis-undecaprenyl phosphate = di-trans,octa-cis-undecaprenyl diphospho-N-acetyl-alpha-D-muramoyl-L-alanyl-D-glutamyl-meso-2,6-diaminopimeloyl-D-alanyl-D-alanine + UMP. It functions in the pathway cell wall biogenesis; peptidoglycan biosynthesis. Its function is as follows. Catalyzes the initial step of the lipid cycle reactions in the biosynthesis of the cell wall peptidoglycan: transfers peptidoglycan precursor phospho-MurNAc-pentapeptide from UDP-MurNAc-pentapeptide onto the lipid carrier undecaprenyl phosphate, yielding undecaprenyl-pyrophosphoryl-MurNAc-pentapeptide, known as lipid I. This Laribacter hongkongensis (strain HLHK9) protein is Phospho-N-acetylmuramoyl-pentapeptide-transferase.